Here is a 429-residue protein sequence, read N- to C-terminus: Phosphoribosylamine--glycine ligase (429 aa).

An ATP-grasp domain is found at 108 to 315; it reads KDFLARHRIP…LVLLVEAALA (208 aa). 134 to 195 lines the ATP pocket; that stretch reads LHEQGAPIVI…EEFLDGEEAS (62 aa). 2 residues coordinate Mg(2+): E285 and N287.

Belongs to the GARS family. Requires Mg(2+) as cofactor. It depends on Mn(2+) as a cofactor.

It catalyses the reaction 5-phospho-beta-D-ribosylamine + glycine + ATP = N(1)-(5-phospho-beta-D-ribosyl)glycinamide + ADP + phosphate + H(+). It functions in the pathway purine metabolism; IMP biosynthesis via de novo pathway; N(1)-(5-phospho-D-ribosyl)glycinamide from 5-phospho-alpha-D-ribose 1-diphosphate: step 2/2. This is Phosphoribosylamine--glycine ligase from Pseudomonas aeruginosa (strain ATCC 15692 / DSM 22644 / CIP 104116 / JCM 14847 / LMG 12228 / 1C / PRS 101 / PAO1).